The following is a 201-amino-acid chain: Holliday junction resolvase RecU (201 aa).

4 residues coordinate Mg(2+): Thr-85, Asp-87, Glu-100, and Gln-119.

The protein belongs to the RecU family. Mg(2+) serves as cofactor.

The protein localises to the cytoplasm. The catalysed reaction is Endonucleolytic cleavage at a junction such as a reciprocal single-stranded crossover between two homologous DNA duplexes (Holliday junction).. Its function is as follows. Endonuclease that resolves Holliday junction intermediates in genetic recombination. Cleaves mobile four-strand junctions by introducing symmetrical nicks in paired strands. Promotes annealing of linear ssDNA with homologous dsDNA. Required for DNA repair, homologous recombination and chromosome segregation. In Geobacillus sp. (strain WCH70), this protein is Holliday junction resolvase RecU.